Here is a 219-residue protein sequence, read N- to C-terminus: MANEVILLDFWPSMFGMRTRIALREKGVEFEYREEDLRNKSPLLLQMNPIHKKIPVLIHNGKPVNESIIQVQYIDEVWSHKNPILPSDPYLRAQARFWADFIDKKLYDAQRKVWATKGEEQEAGKKDFIEILKTLESELGDKPYFSGDDFGYVDIALIGFYTWFPAYEKFANFSIESEVPKLIAWVKKCLQRESVAKSLPDPEKVTEFVSELRKKFVPE.

Positions 3 to 82 (NEVILLDFWP…YIDEVWSHKN (80 aa)) constitute a GST N-terminal domain. Glutathione-binding positions include 13-14 (SM), 39-40 (NK), 53-54 (KI), and 66-67 (ES). The 121-residue stretch at 88 to 208 (DPYLRAQARF…LPDPEKVTEF (121 aa)) folds into the GST C-terminal domain. The residue at position 198 (Ser198) is a Phosphoserine.

This sequence belongs to the GST superfamily. Tau family.

The protein resides in the cytoplasm. It localises to the cytosol. It carries out the reaction RX + glutathione = an S-substituted glutathione + a halide anion + H(+). In terms of biological role, catalyzes the glutathionylation of 12-oxophytodienoate (OPDA). In vitro, possesses glutathione S-transferase activity toward 1-chloro-2,4-dinitrobenzene (CDNB) and benzyl isothiocyanate (BITC), and glutathione peroxidase activity toward cumene hydroperoxide. In Arabidopsis thaliana (Mouse-ear cress), this protein is Glutathione S-transferase U19 (GSTU19).